The following is a 184-amino-acid chain: MRHRLFTLVLGLAVLITAGCGFHLRGTTQVPAQLQTLVLDSSDPYGPLTRAVREQLRLSDVKIVDDATRQDIPSLRVLSSSETRDTVSIFQDGKTAEYQMVLTLQAQVLMPGEDIYPLSVTVFRTFFDNPLAALAKDAEQDIVRQEMREQAAQQLVRKLLTINGSQEVKNRLQSTDSPTAAKRS.

The first 19 residues, 1 to 19 (MRHRLFTLVLGLAVLITAG), serve as a signal peptide directing secretion. Cys20 carries N-palmitoyl cysteine lipidation. Residue Cys20 is the site of S-diacylglycerol cysteine attachment.

This sequence belongs to the LptE lipoprotein family. As to quaternary structure, component of the lipopolysaccharide transport and assembly complex. Interacts with LptD.

The protein resides in the cell outer membrane. Together with LptD, is involved in the assembly of lipopolysaccharide (LPS) at the surface of the outer membrane. Required for the proper assembly of LptD. Binds LPS and may serve as the LPS recognition site at the outer membrane. The sequence is that of LPS-assembly lipoprotein LptE from Pectobacterium atrosepticum (strain SCRI 1043 / ATCC BAA-672) (Erwinia carotovora subsp. atroseptica).